Reading from the N-terminus, the 205-residue chain is Holliday junction branch migration complex subunit RuvA (205 aa).

The interval 1-64 (MIGRLRGTLA…EDAHLLYGFA (64 aa)) is domain I. The segment at 65–143 (EKRERELFRE…AWETSPAMFT (79 aa)) is domain II. The interval 144–154 (LVSDGPLPVAS) is flexible linker. The tract at residues 154–205 (SESSAEADAVSALVSLGYKPQEASKAIAAIKDKAGLSSEELIRRSLKGMISK) is domain III.

Belongs to the RuvA family. Homotetramer. Forms an RuvA(8)-RuvB(12)-Holliday junction (HJ) complex. HJ DNA is sandwiched between 2 RuvA tetramers; dsDNA enters through RuvA and exits via RuvB. An RuvB hexamer assembles on each DNA strand where it exits the tetramer. Each RuvB hexamer is contacted by two RuvA subunits (via domain III) on 2 adjacent RuvB subunits; this complex drives branch migration. In the full resolvosome a probable DNA-RuvA(4)-RuvB(12)-RuvC(2) complex forms which resolves the HJ.

It localises to the cytoplasm. Functionally, the RuvA-RuvB-RuvC complex processes Holliday junction (HJ) DNA during genetic recombination and DNA repair, while the RuvA-RuvB complex plays an important role in the rescue of blocked DNA replication forks via replication fork reversal (RFR). RuvA specifically binds to HJ cruciform DNA, conferring on it an open structure. The RuvB hexamer acts as an ATP-dependent pump, pulling dsDNA into and through the RuvAB complex. HJ branch migration allows RuvC to scan DNA until it finds its consensus sequence, where it cleaves and resolves the cruciform DNA. In Pseudomonas putida (strain ATCC 47054 / DSM 6125 / CFBP 8728 / NCIMB 11950 / KT2440), this protein is Holliday junction branch migration complex subunit RuvA.